Here is a 375-residue protein sequence, read N- to C-terminus: Alcohol dehydrogenase 1C (375 aa).

Serine 2 carries the post-translational modification N-acetylserine. A Phosphoserine modification is found at serine 23. Residues cysteine 47, histidine 68, cysteine 98, cysteine 101, cysteine 104, cysteine 112, and cysteine 175 each contribute to the Zn(2+) site. NAD(+) is bound by residues 200–205 (GLGGVG), aspartate 224, lysine 229, isoleucine 270, 293–295 (VGV), 318–320 (AIF), and arginine 370.

This sequence belongs to the zinc-containing alcohol dehydrogenase family. As to quaternary structure, dimer of identical or non-identical chains of class I alcohol dehydrogenase: ADH1A, ADH1B, and ADH1C. It depends on Zn(2+) as a cofactor. In terms of tissue distribution, expressed in kidney.

Its subcellular location is the cytoplasm. The catalysed reaction is a primary alcohol + NAD(+) = an aldehyde + NADH + H(+). The enzyme catalyses ethanol + NAD(+) = acetaldehyde + NADH + H(+). Alcohol dehydrogenase. Exhibits high activity for ethanol oxidation and plays a major role in ethanol catabolism. The protein is Alcohol dehydrogenase 1C (ADH1C) of Papio hamadryas (Hamadryas baboon).